A 540-amino-acid chain; its full sequence is Raucaffricine-O-beta-D-glucosidase (540 aa).

A beta-D-glucoside contacts are provided by residues Gln36, His140, and 185–186 (NE). Glu186 (proton donor) is an active-site residue. Cys221 and Cys230 form a disulfide bridge. A beta-D-glucoside is bound by residues Tyr347, Glu420, Trp469, 476–477 (EW), and Phe485. Glu420 acts as the Nucleophile in catalysis.

This sequence belongs to the glycosyl hydrolase 1 family.

The enzyme catalyses raucaffricine + H2O = vomilenine + D-glucose. It catalyses the reaction vomilenine + UDP-alpha-D-glucose = raucaffricine + UDP + H(+). Functionally, glucosidase specifically involved in alkaloid biosynthesis leading to the accumulation of several alkaloids, including ajmaline, an important plant-derived pharmaceutical used in the treatment of heart disorders. This is Raucaffricine-O-beta-D-glucosidase from Rauvolfia serpentina (Serpentine wood).